The primary structure comprises 130 residues: Small ribosomal subunit protein uS8 (130 aa).

Belongs to the universal ribosomal protein uS8 family. In terms of assembly, part of the 30S ribosomal subunit.

In terms of biological role, one of the primary rRNA binding proteins, it binds directly to 16S rRNA central domain where it helps coordinate assembly of the platform of the 30S subunit. The chain is Small ribosomal subunit protein uS8 from Pyrobaculum neutrophilum (strain DSM 2338 / JCM 9278 / NBRC 100436 / V24Sta) (Thermoproteus neutrophilus).